Here is a 468-residue protein sequence, read N- to C-terminus: Glutamate--tRNA ligase (468 aa).

The 'HIGH' region motif lies at 8–18 (PSPTGFLHVGG). Residues cysteine 97, cysteine 99, cysteine 124, and aspartate 126 each contribute to the Zn(2+) site. Positions 236 to 240 (KLSKR) match the 'KMSKS' region motif. Lysine 239 is an ATP binding site.

This sequence belongs to the class-I aminoacyl-tRNA synthetase family. Glutamate--tRNA ligase type 1 subfamily. As to quaternary structure, monomer. Requires Zn(2+) as cofactor.

Its subcellular location is the cytoplasm. It catalyses the reaction tRNA(Glu) + L-glutamate + ATP = L-glutamyl-tRNA(Glu) + AMP + diphosphate. In terms of biological role, catalyzes the attachment of glutamate to tRNA(Glu) in a two-step reaction: glutamate is first activated by ATP to form Glu-AMP and then transferred to the acceptor end of tRNA(Glu). In Francisella tularensis subsp. novicida (strain U112), this protein is Glutamate--tRNA ligase.